Reading from the N-terminus, the 306-residue chain is Ankyrin repeat domain-containing protein 23 (306 aa).

Positions 41–90 form a coiled coil; the sequence is QEAVAREKLKLEEEKRKKLERFNSSRLTLDNLTDLENLVQRRRKKRQRHK. The tract at residues 78-107 is disordered; it reads LVQRRRKKRQRHKVPPREPESGAEPQPQVP. Residues 80 to 91 are compositionally biased toward basic residues; the sequence is QRRRKKRQRHKV. ANK repeat units lie at residues 144–173, 177–206, 210–239, and 243–272; these read LHRT…AIEV, LDRT…QVNA, IWST…HINA, and EGDT…KLGV. The interaction with TTN stretch occupies residues 179 to 196; the sequence is RTPVFWACRGGHLDILKR.

Interacts with titin/TTN and MYPN.

Its subcellular location is the nucleus. Its function is as follows. May be involved in the energy metabolism. Could be a molecular link between myofibrillar stretch-induced signaling pathways and muscle gene expression. This Mus musculus (Mouse) protein is Ankyrin repeat domain-containing protein 23 (Ankrd23).